The following is a 264-amino-acid chain: Proteasome subunit beta type-4 (264 aa).

Met1 carries the post-translational modification N-acetylmethionine. A propeptide spanning residues 1 to 45 (MEALLESRSGLWAGGPAPGQFYRIPPTPGSSVDPVSALYGSPITR) is cleaved from the precursor. Position 102 is a phosphotyrosine (Tyr102).

Belongs to the peptidase T1B family. The 26S proteasome consists of a 20S proteasome core and two 19S regulatory subunits. The 20S proteasome core is a barrel-shaped complex made of 28 subunits that are arranged in four stacked rings. The two outer rings are each formed by seven alpha subunits, and the two inner rings are formed by seven beta subunits. The proteolytic activity is exerted by three beta-subunits PSMB5, PSMB6 and PSMB7. Forms a ternary complex with SMAD1 and OAZ1 before PSMB4 is incorporated into the 20S proteasome. Interacts with PRPF19.

The protein resides in the cytoplasm. It localises to the nucleus. Its function is as follows. Non-catalytic component of the 20S core proteasome complex involved in the proteolytic degradation of most intracellular proteins. This complex plays numerous essential roles within the cell by associating with different regulatory particles. Associated with two 19S regulatory particles, forms the 26S proteasome and thus participates in the ATP-dependent degradation of ubiquitinated proteins. The 26S proteasome plays a key role in the maintenance of protein homeostasis by removing misfolded or damaged proteins that could impair cellular functions, and by removing proteins whose functions are no longer required. Associated with the PA200 or PA28, the 20S proteasome mediates ubiquitin-independent protein degradation. This type of proteolysis is required in several pathways including spermatogenesis (20S-PA200 complex) or generation of a subset of MHC class I-presented antigenic peptides (20S-PA28 complex). SMAD1/OAZ1/PSMB4 complex mediates the degradation of the CREBBP/EP300 repressor SNIP1. The sequence is that of Proteasome subunit beta type-4 (PSMB4) from Bos taurus (Bovine).